The chain runs to 137 residues: Gonadotropin subunit beta-1 (137 aa).

Positions 1-24 are cleaved as a signal peptide; that stretch reads MYCTHLRMLQLVVMATLWVTPVRA. Intrachain disulfides connect Cys-32/Cys-78, Cys-46/Cys-93, Cys-55/Cys-108, Cys-59/Cys-110, and Cys-113/Cys-120. An N-linked (GlcNAc...) asparagine glycan is attached at Asn-36.

It belongs to the glycoprotein hormones subunit beta family. Heterodimer of an alpha and a beta chain.

It is found in the secreted. Its function is as follows. Involved in gametogenesis and steroidogenesis. This is Gonadotropin subunit beta-1 (cgba) from Coregonus autumnalis (Arctic cisco).